A 203-amino-acid polypeptide reads, in one-letter code: Putative 3-methyladenine DNA glycosylase (203 aa).

This sequence belongs to the DNA glycosylase MPG family.

The sequence is that of Putative 3-methyladenine DNA glycosylase from Clostridium beijerinckii (strain ATCC 51743 / NCIMB 8052) (Clostridium acetobutylicum).